The following is a 356-amino-acid chain: S-adenosylmethionine:tRNA ribosyltransferase-isomerase (356 aa).

The protein belongs to the QueA family. As to quaternary structure, monomer.

It localises to the cytoplasm. The enzyme catalyses 7-aminomethyl-7-carbaguanosine(34) in tRNA + S-adenosyl-L-methionine = epoxyqueuosine(34) in tRNA + adenine + L-methionine + 2 H(+). The protein operates within tRNA modification; tRNA-queuosine biosynthesis. Functionally, transfers and isomerizes the ribose moiety from AdoMet to the 7-aminomethyl group of 7-deazaguanine (preQ1-tRNA) to give epoxyqueuosine (oQ-tRNA). The chain is S-adenosylmethionine:tRNA ribosyltransferase-isomerase from Yersinia pestis.